The chain runs to 229 residues: NAD(P)H-hydrate epimerase (229 aa).

The region spanning 10 to 217 (AINVDLELFN…ALQRKYELNL (208 aa)) is the YjeF N-terminal domain. Position 60-64 (60-64 (NNGGD)) interacts with (6S)-NADPHX. Positions 61 and 125 each coordinate K(+). (6S)-NADPHX-binding positions include 129–135 (GFSFKPP) and D158. S161 is a binding site for K(+).

It belongs to the NnrE/AIBP family. The cofactor is K(+).

The enzyme catalyses (6R)-NADHX = (6S)-NADHX. It carries out the reaction (6R)-NADPHX = (6S)-NADPHX. Functionally, catalyzes the epimerization of the S- and R-forms of NAD(P)HX, a damaged form of NAD(P)H that is a result of enzymatic or heat-dependent hydration. This is a prerequisite for the S-specific NAD(P)H-hydrate dehydratase to allow the repair of both epimers of NAD(P)HX. This chain is NAD(P)H-hydrate epimerase, found in Drosophila virilis (Fruit fly).